The following is a 432-amino-acid chain: Anaerobic glycerol-3-phosphate dehydrogenase subunit B (432 aa).

Belongs to the anaerobic G-3-P dehydrogenase subunit B family. Composed of a catalytic GlpA/B dimer and of membrane bound GlpC. Requires FMN as cofactor.

It catalyses the reaction a quinone + sn-glycerol 3-phosphate = dihydroxyacetone phosphate + a quinol. Its pathway is polyol metabolism; glycerol degradation via glycerol kinase pathway; glycerone phosphate from sn-glycerol 3-phosphate (anaerobic route): step 1/1. Conversion of glycerol 3-phosphate to dihydroxyacetone. Uses fumarate or nitrate as electron acceptor. This chain is Anaerobic glycerol-3-phosphate dehydrogenase subunit B, found in Haemophilus influenzae (strain PittEE).